The chain runs to 485 residues: Protein nucleotidyltransferase YdiU (485 aa).

The ATP site is built by Gly90, Gly92, Arg93, Lys113, Asp125, Gly126, Arg176, and Arg183. Asp252 functions as the Proton acceptor in the catalytic mechanism. Positions 253 and 262 each coordinate Mg(2+). Asp262 contacts ATP.

The protein belongs to the SELO family. It depends on Mg(2+) as a cofactor. Requires Mn(2+) as cofactor.

The catalysed reaction is L-seryl-[protein] + ATP = 3-O-(5'-adenylyl)-L-seryl-[protein] + diphosphate. The enzyme catalyses L-threonyl-[protein] + ATP = 3-O-(5'-adenylyl)-L-threonyl-[protein] + diphosphate. It catalyses the reaction L-tyrosyl-[protein] + ATP = O-(5'-adenylyl)-L-tyrosyl-[protein] + diphosphate. It carries out the reaction L-histidyl-[protein] + UTP = N(tele)-(5'-uridylyl)-L-histidyl-[protein] + diphosphate. The catalysed reaction is L-seryl-[protein] + UTP = O-(5'-uridylyl)-L-seryl-[protein] + diphosphate. The enzyme catalyses L-tyrosyl-[protein] + UTP = O-(5'-uridylyl)-L-tyrosyl-[protein] + diphosphate. In terms of biological role, nucleotidyltransferase involved in the post-translational modification of proteins. It can catalyze the addition of adenosine monophosphate (AMP) or uridine monophosphate (UMP) to a protein, resulting in modifications known as AMPylation and UMPylation. In Aliivibrio fischeri (strain MJ11) (Vibrio fischeri), this protein is Protein nucleotidyltransferase YdiU.